We begin with the raw amino-acid sequence, 272 residues long: Diaminopimelate epimerase (272 aa).

Substrate-binding residues include Asn11 and Asn60. Cys69 (proton donor) is an active-site residue. Substrate contacts are provided by residues 70 to 71 (GN), Asn181, and 199 to 200 (ER). The active-site Proton acceptor is Cys209. A substrate-binding site is contributed by 210–211 (GT).

The protein belongs to the diaminopimelate epimerase family. Homodimer.

It localises to the cytoplasm. It carries out the reaction (2S,6S)-2,6-diaminopimelate = meso-2,6-diaminopimelate. Its pathway is amino-acid biosynthesis; L-lysine biosynthesis via DAP pathway; DL-2,6-diaminopimelate from LL-2,6-diaminopimelate: step 1/1. In terms of biological role, catalyzes the stereoinversion of LL-2,6-diaminopimelate (L,L-DAP) to meso-diaminopimelate (meso-DAP), a precursor of L-lysine and an essential component of the bacterial peptidoglycan. The polypeptide is Diaminopimelate epimerase (Helicobacter pylori (strain P12)).